Reading from the N-terminus, the 275-residue chain is MATQETDDSLISTDVQTDATERGDQPDETVVETKHLDVHYGDEQALDDVSIDIPENKVTALIGPSGCGKSTFLRCINRMNDQIDACRVDGKVVFKGKNVYDDDVDPVALRRKIGQVFQTPNPFPKSIRENVVYGLEVQGEPASDEDVERALRGAALWDEVNNQLDSSGLDLSGGQQQRLCIARAIAPDPEVILMDEPTSALDPVAASKIEDLIDELVEDYTVIIVTHNMQQAARISDKTAVFLTGGNLVEFDDTTNIFENPEDDRVEDYITGKFG.

The disordered stretch occupies residues 1–26 (MATQETDDSLISTDVQTDATERGDQP). Positions 9–18 (SLISTDVQTD) are enriched in polar residues. The region spanning 31–270 (VETKHLDVHY…PEDDRVEDYI (240 aa)) is the ABC transporter domain. 63–70 (GPSGCGKS) contributes to the ATP binding site.

Belongs to the ABC transporter superfamily. Phosphate importer (TC 3.A.1.7) family. As to quaternary structure, the complex is composed of two ATP-binding proteins (PstB), two transmembrane proteins (PstC and PstA) and a solute-binding protein (PstS).

It localises to the cell membrane. The catalysed reaction is phosphate(out) + ATP + H2O = ADP + 2 phosphate(in) + H(+). In terms of biological role, part of the ABC transporter complex PstSACB involved in phosphate import. Responsible for energy coupling to the transport system. This Natronomonas pharaonis (strain ATCC 35678 / DSM 2160 / CIP 103997 / JCM 8858 / NBRC 14720 / NCIMB 2260 / Gabara) (Halobacterium pharaonis) protein is Phosphate import ATP-binding protein PstB 3.